Reading from the N-terminus, the 142-residue chain is Small heat shock protein IbpB (142 aa).

Residues 26-137 enclose the sHSP domain; that stretch reads SGESQSFPPY…APQRIAINER (112 aa).

Belongs to the small heat shock protein (HSP20) family. Homodimer. Forms homomultimers of about 100-150 subunits at optimal growth temperatures. Conformation changes to oligomers at high temperatures or high ionic concentrations. The decrease in size of the multimers is accompanied by an increase in chaperone activity.

The protein localises to the cytoplasm. In terms of biological role, associates with aggregated proteins, together with IbpA, to stabilize and protect them from irreversible denaturation and extensive proteolysis during heat shock and oxidative stress. Aggregated proteins bound to the IbpAB complex are more efficiently refolded and reactivated by the ATP-dependent chaperone systems ClpB and DnaK/DnaJ/GrpE. Its activity is ATP-independent. The chain is Small heat shock protein IbpB from Salmonella newport (strain SL254).